Consider the following 407-residue polypeptide: BTB/POZ and MATH domain-containing protein 1 (407 aa).

In terms of domain architecture, MATH spans 33-167 (NGFHEFKICG…ENSLLVRCRV (135 aa)). Positions 203-270 (CDVVFQVDGE…IYWDELPDMQ (68 aa)) constitute a BTB domain.

This sequence belongs to the Tdpoz family. As to quaternary structure, homodimer or heterodimer with BPM3, BPM5 and BPM6. Interacts with CUL3A and CUL3B. Interacts with RAP2-4 and RAP2-13. Binds to MYB56 at the promoter of FLOWERING LOCUS T (FT). In terms of tissue distribution, ubiquitous.

It is found in the nucleus. It participates in protein modification; protein ubiquitination. Functionally, may act as a substrate-specific adapter of an E3 ubiquitin-protein ligase complex (CUL3-RBX1-BTB) which mediates the ubiquitination and subsequent proteasomal degradation of target proteins. In Arabidopsis thaliana (Mouse-ear cress), this protein is BTB/POZ and MATH domain-containing protein 1 (BPM1).